Here is a 141-residue protein sequence, read N- to C-terminus: Antifungal protein ginkbilobin-like protein 1 (141 aa).

A signal peptide spans 1-32 (MSISSKFQLRSSTSLLLLVALMVVMGMDGAAA). Residues 36-141 (TNFVSSACNT…CFIQYEQHSF (106 aa)) form the Gnk2-homologous domain. 3 cysteine pairs are disulfide-bonded: cysteine 43–cysteine 119, cysteine 95–cysteine 104, and cysteine 107–cysteine 132. Position 44 (asparagine 44) interacts with alpha-D-mannopyranose. The alpha-D-mannopyranose site is built by arginine 126 and glutamate 137.

In terms of biological role, exerts antifungal activity through its carbohydrate-binding specificity. This Picea glauca (White spruce) protein is Antifungal protein ginkbilobin-like protein 1.